Reading from the N-terminus, the 338-residue chain is MNAPRLTDTTLRDGSHALAHTFTRQQVRDIVRALDRAGVPVIEVTHGDGLAGSSLQYGFSRVPDLDLIAEARETAERARIAALLLPGIGTRRELRAAVERGVQVLRIATQCTEADISEEHFKMAKDMGLETVGFLMMSHMRPPEFLAEQARLMESYGADCVYVVDSAGAMLPHDAAARVQALKAALTVQVGFHAHNNLGLGIGNTLAALEAGADQIDGCLRGLGAGAGNAATEVLAAVLDRLGINPGLDVLALMDAAEYVVAPIMPFQPFPDRDAITIGYAGVYSTFLLHARRIGEQLGVDPRAILIELGRRQTVAGQEDWILDVALELVRQQQTTPV.

Positions 4 to 254 (PRLTDTTLRD…NPGLDVLALM (251 aa)) constitute a Pyruvate carboxyltransferase domain. 12-13 (RD) contacts substrate. Asp-13 is a binding site for Mn(2+). His-16 functions as the Proton acceptor in the catalytic mechanism. Substrate-binding residues include Ser-166 and His-193. His-193 and His-195 together coordinate Mn(2+). Tyr-284 contributes to the substrate binding site.

The protein belongs to the 4-hydroxy-2-oxovalerate aldolase family.

The enzyme catalyses (S)-4-hydroxy-2-oxopentanoate = acetaldehyde + pyruvate. This chain is 4-hydroxy-2-oxovalerate aldolase, found in Roseiflexus sp. (strain RS-1).